A 138-amino-acid chain; its full sequence is Large ribosomal subunit protein bL17 (138 aa).

It belongs to the bacterial ribosomal protein bL17 family. As to quaternary structure, part of the 50S ribosomal subunit. Contacts protein L32.

In Buchnera aphidicola subsp. Schizaphis graminum (strain Sg), this protein is Large ribosomal subunit protein bL17.